A 173-amino-acid polypeptide reads, in one-letter code: Ribosome maturation factor RimM (173 aa).

A PRC barrel domain is found at 78-157 (EEEFYLADLI…VLVVPPEEVE (80 aa)). Positions 152-173 (PPEEVEAQEPPEKDAGGDEPSP) are disordered.

It belongs to the RimM family. In terms of assembly, binds ribosomal protein uS19.

It is found in the cytoplasm. Its function is as follows. An accessory protein needed during the final step in the assembly of 30S ribosomal subunit, possibly for assembly of the head region. Essential for efficient processing of 16S rRNA. May be needed both before and after RbfA during the maturation of 16S rRNA. It has affinity for free ribosomal 30S subunits but not for 70S ribosomes. The polypeptide is Ribosome maturation factor RimM (Beijerinckia indica subsp. indica (strain ATCC 9039 / DSM 1715 / NCIMB 8712)).